We begin with the raw amino-acid sequence, 423 residues long: Gamma-glutamyl phosphate reductase (423 aa).

It belongs to the gamma-glutamyl phosphate reductase family.

The protein localises to the cytoplasm. It catalyses the reaction L-glutamate 5-semialdehyde + phosphate + NADP(+) = L-glutamyl 5-phosphate + NADPH + H(+). Its pathway is amino-acid biosynthesis; L-proline biosynthesis; L-glutamate 5-semialdehyde from L-glutamate: step 2/2. In terms of biological role, catalyzes the NADPH-dependent reduction of L-glutamate 5-phosphate into L-glutamate 5-semialdehyde and phosphate. The product spontaneously undergoes cyclization to form 1-pyrroline-5-carboxylate. This is Gamma-glutamyl phosphate reductase from Magnetococcus marinus (strain ATCC BAA-1437 / JCM 17883 / MC-1).